The following is a 758-amino-acid chain: Solute carrier family 26 member 6 (758 aa).

At 1–117 (MGLPDGSDQG…PQGLAYALLA (117 aa)) the chain is on the cytoplasmic side. Residues 118–138 (GLPPMFGLYSSFYPVFIYFLF) form a helical membrane-spanning segment. At 139–187 (GTSRHISVGTFAVMSVMVGSVTESLTADKAFVQGLNATADDARVQVAYT) the chain is on the extracellular side. Asn174 carries N-linked (GlcNAc) asparagine glycosylation. A helical membrane pass occupies residues 188 to 208 (LSFLVGLFQVGLGLVHFGFVV). At 209-263 (TYLSEPLVRSYTTAASVQVLVSQLKYVFGIKLSSHSGPLSVIYTVLEVCAQLPET) the chain is on the cytoplasmic side. Residues 264-284 (VPGTVVTAIVAGVALVLVKLL) traverse the membrane as a helical segment. The Extracellular portion of the chain corresponds to 285-292 (NEKLHRRL). The chain crosses the membrane as a helical span at residues 293–313 (PLPIPGELLTLIGATGISYGV). Topologically, residues 314-340 (KLNDRFKVDVVGNITTGLIPPVAPKTE) are cytoplasmic. The helical transmembrane segment at 341 to 361 (LFATLVGNAFAIAVVGFAIAI) threads the bilayer. Topologically, residues 362–380 (SLGKIFALRHGYRVDSNQE) are extracellular. A helical transmembrane segment spans residues 381–401 (LVALGLSNLIGGFFQCFPVSC). The Cytoplasmic segment spans residues 402–417 (SMSRSLVQESTGGNTQ). The chain crosses the membrane as a helical span at residues 418–438 (VAGAVSSLFILLIIVKLGELF). At 439-485 (RDLPKAVLAAVIIVNLKGMMKQFSDICSLWKANRVDLLIWLVTFVAT) the chain is on the extracellular side. Residues 486 to 506 (ILLNLDIGLAVSIVFSLLLVV) traverse the membrane as a helical segment. At 507 to 758 (VRMQLPHYSV…PKSPVLATKL (252 aa)) the chain is on the cytoplasmic side. In terms of domain architecture, STAS spans 531–741 (EYSGAKEVPG…ASVHDAVTFA (211 aa)). A disordered region spans residues 585 to 608 (EMKLKRMKKAKKSQKQDASSKISS). Residue Ser751 is modified to Phosphoserine.

Interacts (via C-terminal domain) with PDZK1 (via C-terminal PDZ domain); the interaction induces chloride and oxalate exchange transport. Interacts with CFTR, SLC26A3 and NHERF1. Interacts with AHCYL1; the interaction increases SLC26A6 activity. N-glycosylated. Glycosylation at Asn-174 positively regulates its chloride oxalate exchanger activity. In terms of tissue distribution, expressed in kidney (at protein level). Expressed in spermatogenic cells. Expressed in intestine, kidney, testis, brain, muscle, heart, and stomach. Expressed in the submandibular and sublingual salivary glands. As to expression, highly expressed in stomach, kidney, heart and small intestine, low in the lung, liver, testis, brain, skeletal muscle and colon. Expressed in the heart.

It is found in the cell membrane. Its subcellular location is the apical cell membrane. The protein resides in the cytoplasmic vesicle membrane. It localises to the microsome. It catalyses the reaction 2 hydrogencarbonate(in) + chloride(out) = 2 hydrogencarbonate(out) + chloride(in). The catalysed reaction is oxalate(in) + chloride(out) = oxalate(out) + chloride(in). It carries out the reaction oxalate(in) + formate(out) = oxalate(out) + formate(in). The enzyme catalyses oxalate(in) + sulfate(out) = oxalate(out) + sulfate(in). It catalyses the reaction formate(in) + chloride(out) = formate(out) + chloride(in). The catalysed reaction is sulfate(in) = sulfate(out). With respect to regulation, apical membrane chloride-bicarbonate exchange activity of the pancreatic duct is inhibited by 4,4'-diisothiocyanatostilbene-2,2'-disulfonic acid (DIDS). Oxalate secretion in the duodenum and chloride-formate exchange activity is inhibited by DIDS. Its activity is regulated as follows. Chloride-formate exchange activity and transcellular sulfate absorption is inhibited by 4,4'-diisothiocyanatostilbene-2,2'-disulfonic acid (DIDS). Functionally, apical membrane anion-exchanger with wide epithelial distribution that plays a role as a component of the pH buffering system for maintaining acid-base homeostasis. Acts as a versatile DIDS-sensitive inorganic and organic anion transporter that mediates the uptake of monovalent anions like chloride, bicarbonate, formate and hydroxyl ion and divalent anions like sulfate and oxalate. Functions in multiple exchange modes involving pairs of these anions, which include chloride-bicarbonate, chloride-oxalate, oxalate-formate, oxalate-sulfate and chloride-formate exchange. Apical membrane chloride-bicarbonate exchanger that mediates luminal chloride absorption and bicarbonate secretion by the small intestinal brush border membrane and contributes to intracellular pH regulation in the duodenal upper villous epithelium during proton-coupled peptide absorption, possibly by providing a bicarbonate import pathway. Its association with carbonic anhydrase CA2 forms a bicarbonate transport metabolon; hence maximizes the local concentration of bicarbonate at the transporter site. Also mediates intestinal chloride absorption and oxalate secretion, thereby preventing hyperoxaluria and calcium oxalate urolithiasis. Transepithelial oxalate secretion, chloride-formate, chloride-oxalate and chloride-bicarbonate transport activities in the duodenum are inhibited by PKC activation in a calcium-independent manner. The apical membrane chloride-bicarbonate exchanger also provides a major route for fluid and bicarbonate secretion into the proximal tubules of the kidney as well as into the proximal part of the interlobular pancreatic ductal tree, where it mediates electrogenic chloride-bicarbonate exchange with a chloride-bicarbonate stoichiometry of 1:2, and hence will dilute and alkalinize protein-rich acinar secretion. Also mediates the transcellular sulfate absorption and oxalate secretion across the apical membrane in the duodenum and the formate ion efflux at the apical brush border of cells in the proximal tubules of kidney. Plays a role in sperm capacitation by increasing intracellular pH. In terms of biological role, mediates electrogenic chloride-bicarbonate exchange with a chloride-bicarbonate stoichiometry of 1:2. Also mediates exchange of chloride-formate and chloride-oxalate ions. Mediates transcellular sulfate absorption. The sequence is that of Solute carrier family 26 member 6 from Mus musculus (Mouse).